The sequence spans 245 residues: Ribonuclease PH (245 aa).

Phosphate contacts are provided by residues Arg-86 and 124-126 (GTR).

This sequence belongs to the RNase PH family. In terms of assembly, homohexameric ring arranged as a trimer of dimers.

The catalysed reaction is tRNA(n+1) + phosphate = tRNA(n) + a ribonucleoside 5'-diphosphate. In terms of biological role, phosphorolytic 3'-5' exoribonuclease that plays an important role in tRNA 3'-end maturation. Removes nucleotide residues following the 3'-CCA terminus of tRNAs; can also add nucleotides to the ends of RNA molecules by using nucleoside diphosphates as substrates, but this may not be physiologically important. Probably plays a role in initiation of 16S rRNA degradation (leading to ribosome degradation) during starvation. The protein is Ribonuclease PH of Bacillus cereus (strain ATCC 10987 / NRS 248).